The sequence spans 408 residues: Acetate kinase (408 aa).

Asn7 provides a ligand contact to Mg(2+). Residue Lys14 participates in ATP binding. Arg98 contributes to the substrate binding site. Asp155 functions as the Proton donor/acceptor in the catalytic mechanism. Residues 214–218 (HLGNG), 289–291 (DLR), and 337–341 (GVGEN) contribute to the ATP site. Glu390 contributes to the Mg(2+) binding site.

Belongs to the acetokinase family. Homodimer. Requires Mg(2+) as cofactor. The cofactor is Mn(2+).

The protein resides in the cytoplasm. It carries out the reaction acetate + ATP = acetyl phosphate + ADP. The protein operates within metabolic intermediate biosynthesis; acetyl-CoA biosynthesis; acetyl-CoA from acetate: step 1/2. Functionally, catalyzes the formation of acetyl phosphate from acetate and ATP. Can also catalyze the reverse reaction. The protein is Acetate kinase of Cyanothece sp. (strain PCC 7425 / ATCC 29141).